A 236-amino-acid polypeptide reads, in one-letter code: ATP synthase subunit a (236 aa).

A run of 5 helical transmembrane segments spans residues 17–37 (LSDMLMITITCLIVFIIAVAA), 75–95 (FLTLGVTLIMYVFVANMLGLP), 112–132 (DATVTLTLAVMVVALTHYYGV), 174–194 (IYAGEILLGLLASLGTHYGVL), and 208–228 (FSIFVGTIQAFIFTMLTMVYM).

This sequence belongs to the ATPase A chain family. In terms of assembly, F-type ATPases have 2 components, CF(1) - the catalytic core - and CF(0) - the membrane proton channel. CF(1) has five subunits: alpha(3), beta(3), gamma(1), delta(1), epsilon(1). CF(0) has three main subunits: a(1), b(2) and c(9-12). The alpha and beta chains form an alternating ring which encloses part of the gamma chain. CF(1) is attached to CF(0) by a central stalk formed by the gamma and epsilon chains, while a peripheral stalk is formed by the delta and b chains.

It localises to the cell membrane. Its function is as follows. Key component of the proton channel; it plays a direct role in the translocation of protons across the membrane. The chain is ATP synthase subunit a from Geobacillus stearothermophilus (Bacillus stearothermophilus).